Here is a 355-residue protein sequence, read N- to C-terminus: Probable nitronate monooxygenase (355 aa).

FMN contacts are provided by residues N71, Q175, G180, G218, and 237 to 240 (QMGT).

Belongs to the nitronate monooxygenase family. NMO class I subfamily. The cofactor is FMN.

It catalyses the reaction 3 propionate 3-nitronate + 3 O2 + H2O = 3 3-oxopropanoate + 2 nitrate + nitrite + H2O2 + 3 H(+). Its function is as follows. Nitronate monooxygenase that uses molecular oxygen to catalyze the oxidative denitrification of alkyl nitronates. Acts on propionate 3-nitronate (P3N), the presumed physiological substrate. Probably functions in the detoxification of P3N, a metabolic poison produced by plants and fungi as a defense mechanism. The sequence is that of Probable nitronate monooxygenase from Staphylococcus aureus (strain MRSA252).